Consider the following 545-residue polypeptide: Pseudouridylate synthase RPUSD2 (545 aa).

Residues 48-121 (GLRASHQQNG…PPPKKRRTGV (74 aa)) are disordered. A Phosphoserine modification is found at serine 68. Residue aspartate 274 is part of the active site. Residue threonine 477 is modified to Phosphothreonine.

Belongs to the pseudouridine synthase RluA family.

The enzyme catalyses a uridine in mRNA = a pseudouridine in mRNA. In terms of biological role, pseudouridine synthase that catalyzes pseudouridylation of mRNAs. The chain is Pseudouridylate synthase RPUSD2 from Homo sapiens (Human).